The following is a 74-amino-acid chain: Defensin Lc-def (74 aa).

An N-terminal signal peptide occupies residues 1–27; the sequence is MEKKTVAALSFLFIVLFVAQEIAVTEA. Intrachain disulfides connect Cys30/Cys74, Cys41/Cys62, Cys47/Cys68, and Cys51/Cys70.

The protein resides in the secreted. In terms of biological role, has antifungal activity against the phytopathogenic fungus A.niger VKM F-2259, but not against A.alternata VKM F-3047. Does not inhibit trypsin or chymotrypsin. The protein is Defensin Lc-def of Lens culinaris subsp. culinaris (Cultivated lentil).